The chain runs to 255 residues: MNDYIVVKCGGSMLEQLNDVFFDCIKKLQQQYKVVIVHGGGPEIDAKLKDCNINVEKRDGLRVTPKEVMDVVQMVLCGSTNKKFVMNLQKHNLLAVGCSGCDGKLLQVQPVSEEIGYVGEVSYVETALLKGLINMNYIPVIAPIGIHDNEIYNINADTAAAGIAAALSAKELILITDVDGILHEGKLVKKTDESEIATLIEKGVITGGMIPKVQAALASLKMGVQKISIVNGTKDFTEDTGECIGMTVTRGVSIV.

Substrate is bound by residues 40-41 (GG), R62, and N153.

The protein belongs to the acetylglutamate kinase family. ArgB subfamily.

The protein localises to the cytoplasm. The catalysed reaction is N-acetyl-L-glutamate + ATP = N-acetyl-L-glutamyl 5-phosphate + ADP. The protein operates within amino-acid biosynthesis; L-arginine biosynthesis; N(2)-acetyl-L-ornithine from L-glutamate: step 2/4. Catalyzes the ATP-dependent phosphorylation of N-acetyl-L-glutamate. The polypeptide is Acetylglutamate kinase (Bacillus anthracis (strain A0248)).